Reading from the N-terminus, the 156-residue chain is Small ribosomal subunit protein uS7 (156 aa).

The protein belongs to the universal ribosomal protein uS7 family. Part of the 30S ribosomal subunit. Contacts proteins S9 and S11.

Functionally, one of the primary rRNA binding proteins, it binds directly to 16S rRNA where it nucleates assembly of the head domain of the 30S subunit. Is located at the subunit interface close to the decoding center, probably blocks exit of the E-site tRNA. In Campylobacter jejuni subsp. jejuni serotype O:6 (strain 81116 / NCTC 11828), this protein is Small ribosomal subunit protein uS7.